A 363-amino-acid chain; its full sequence is MEPGAAELYDQALLGILQHVGNVQDFLRVLFGFLYRKTDFYRLLRHPSDRMGFPPGAAQALVLQVFKTFDHMARQDDEKRKKELEEKIRKKEEEAKALPAAETEKVAVPVPVQEVEIDAAADLSGPQEVEKEEPPGSQDPEHTVTHGLEKAEAPGTVSSAAEGPKDPPVLPRIQEQFQKNPDSYNGAIRENYIWSQDYTDLEVRVPVPKHVMKGKQVSVALSSGTIRVAMVEENGERVLMEGKLTHKINTESSLWSLEPGRCVLVNLSKVGEYWWSAILEGEEPIDIDKINKERSMATVDEEEQAVLDRLTFDYHQKLQGKPQSHELKVHEMLKKGWDAEGSPFRGQRFDPAMFNISPGAVQF.

Residues 120 to 143 (AADLSGPQEVEKEEPPGSQDPEHT) are disordered. The segment covering 128 to 143 (EVEKEEPPGSQDPEHT) has biased composition (basic and acidic residues). The region spanning 187–279 (AIRENYIWSQ…VGEYWWSAIL (93 aa)) is the CS domain. A phosphoserine mark is found at S342 and S357.

This chain is NudC domain-containing protein 3 (Nudcd3), found in Mus musculus (Mouse).